The following is a 1416-amino-acid chain: 1-phosphatidylinositol 4,5-bisphosphate phosphodiesterase eta-2 (1416 aa).

The interval 1-155 (MSGPWPSPDS…WVTGLRYLMA (155 aa)) is necessary for plasma membrane localization. The region spanning 47-155 (GAMQEGMQMV…WVTGLRYLMA (109 aa)) is the PH domain. 2 consecutive EF-hand domains span residues 169-204 (TRDQ…LNVN) and 205-241 (LPRQ…MSTR). 5 residues coordinate Ca(2+): Asp182, Asn184, Asp186, Ser188, and Glu193. The region spanning 326-471 (QDMTQPLSHY…LKGKILVKGK (146 aa)) is the PI-PLC X-box domain. His341 is a catalytic residue. Ca(2+) contacts are provided by Asn342, Glu371, and Asp373. His385 is a catalytic residue. Position 420 (Glu420) interacts with Ca(2+). Residues Lys469 and Lys471 each contribute to the substrate site. A phosphoserine mark is found at Ser487 and Ser491. Residues 535-620 (DPNNFSVSTL…RGATRQKKTM (86 aa)) form a disordered region. Residues 537–546 (NNFSVSTLSP) show a composition bias toward polar residues. Residues 581–592 (SRRKKKGSKLKK) are compositionally biased toward basic residues. Ser595 and Ser605 each carry phosphoserine. The PI-PLC Y-box domain maps to 626-740 (LSDLVKYTKS…GYVLKPGCMC (115 aa)). Positions 653 and 680 each coordinate substrate. In terms of domain architecture, C2 spans 740–869 (CQGVFNPNSE…PGYRHVYLEG (130 aa)). Residues Ile784, Asp786, Asp810, Asp839, His840, and Asp841 each contribute to the Ca(2+) site. 3 disordered regions span residues 905–1109 (GSLD…GGWR), 1121–1222 (YSDA…LQPR), and 1315–1405 (ITSP…GPAS). The span at 1011 to 1021 (APGPGPPPPAA) shows a compositional bias: pro residues. Residues 1073 to 1083 (GSQTDGRSQPR) show a composition bias toward polar residues. The segment covering 1143–1166 (VSSSSSMSSSDTVIDLSLPSLGLG) has biased composition (low complexity). The segment covering 1199–1208 (KSKSNPNLRA) has biased composition (polar residues). Positions 1324–1333 (AGEGVAGGPG) are enriched in gly residues.

Requires Ca(2+) as cofactor. As to expression, expressed in retina and kidney.

Its subcellular location is the cytoplasm. It is found in the cell membrane. It carries out the reaction a 1,2-diacyl-sn-glycero-3-phospho-(1D-myo-inositol-4,5-bisphosphate) + H2O = 1D-myo-inositol 1,4,5-trisphosphate + a 1,2-diacyl-sn-glycerol + H(+). With respect to regulation, activity is stimulated by GNB1:GNG2. The production of the second messenger molecules diacylglycerol (DAG) and inositol 1,4,5-trisphosphate (IP3) is mediated by activated phosphatidylinositol-specific phospholipase C enzymes. This phospholipase activity is very sensitive to calcium. May be important for formation and maintenance of the neuronal network in the postnatal brain. The polypeptide is 1-phosphatidylinositol 4,5-bisphosphate phosphodiesterase eta-2 (Homo sapiens (Human)).